The following is a 123-amino-acid chain: uncharacterized protein (123 aa).

This is an uncharacterized protein from Methanocaldococcus jannaschii (strain ATCC 43067 / DSM 2661 / JAL-1 / JCM 10045 / NBRC 100440) (Methanococcus jannaschii).